Here is a 469-residue protein sequence, read N- to C-terminus: RuvB-like helicase 2 (469 aa).

73 to 80 provides a ligand contact to ATP; sequence GEPGTGKT.

It belongs to the RuvB family. In terms of assembly, forms homohexameric rings. May form a dodecamer with rvb1 made of two stacked hexameric rings. Component of the chromatin remodeling Ino80 complex. Component of the RNA polymerase II holoenzyme complex.

Its subcellular location is the nucleus. It carries out the reaction ATP + H2O = ADP + phosphate + H(+). Functionally, has double-stranded DNA-stimulated ATPase and ATP-dependent DNA helicase (5' to 3') activity suggesting a role in nuclear processes such as recombination and transcription. Proposed core component of the chromatin remodeling Ino80 complex which is involved in transcriptional regulation, DNA replication and probably DNA repair. This Dictyostelium discoideum (Social amoeba) protein is RuvB-like helicase 2 (rvb2).